The primary structure comprises 247 residues: tRNA uridine(34) hydroxylase (247 aa).

One can recognise a Rhodanese domain in the interval 124–218; that stretch reads TQQDVIVIDT…YLEDTQNKNN (95 aa). Cysteine 178 (cysteine persulfide intermediate) is an active-site residue.

This sequence belongs to the TrhO family.

The enzyme catalyses uridine(34) in tRNA + AH2 + O2 = 5-hydroxyuridine(34) in tRNA + A + H2O. In terms of biological role, catalyzes oxygen-dependent 5-hydroxyuridine (ho5U) modification at position 34 in tRNAs. In Rickettsia conorii (strain ATCC VR-613 / Malish 7), this protein is tRNA uridine(34) hydroxylase.